The primary structure comprises 391 residues: Thioredoxin-interacting protein (391 aa).

A Glycyl lysine isopeptide (Lys-Gly) (interchain with G-Cter in ubiquitin) cross-link involves residue Lys212. The residue at position 361 (Ser361) is a Phosphoserine.

Belongs to the arrestin family. Homodimer; disulfide-linked. Interacts with TXN/thioredoxin through its redox-active site. Interacts with transcriptional repressors ZBTB16, ZBTB32 and HDAC1. Interacts with DDIT4. Ubiquitinated; undergoes heterotypic 'Lys-48'-/'Lys-63'-branched polyubiquitination catalyzed by ITCH and UBR5 resulting in proteasomal degradation. Deubiquitinated by USP5, leading to TXNIP stabilization.

Its subcellular location is the cytoplasm. In terms of biological role, may act as an oxidative stress mediator by inhibiting thioredoxin activity or by limiting its bioavailability. Interacts with COPS5 and restores COPS5-induced suppression of CDKN1B stability, blocking the COPS5-mediated translocation of CDKN1B from the nucleus to the cytoplasm. Functions as a transcriptional repressor, possibly by acting as a bridge molecule between transcription factors and corepressor complexes, and over-expression will induce G0/G1 cell cycle arrest. Required for the maturation of natural killer cells. Acts as a suppressor of tumor cell growth. Inhibits the proteasomal degradation of DDIT4, and thereby contributes to the inhibition of the mammalian target of rapamycin complex 1 (mTORC1). The chain is Thioredoxin-interacting protein (TXNIP) from Pongo abelii (Sumatran orangutan).